The chain runs to 332 residues: Eukaryotic translation initiation factor 3 subunit I (332 aa).

WD repeat units follow at residues glycine 8–histidine 47, glycine 48–threonine 87, aspartate 144–serine 182, and glycine 279–methionine 318.

The protein belongs to the eIF-3 subunit I family. In terms of assembly, component of the eukaryotic translation initiation factor 3 (eIF-3) complex.

The protein localises to the cytoplasm. In terms of biological role, component of the eukaryotic translation initiation factor 3 (eIF-3) complex, which is involved in protein synthesis of a specialized repertoire of mRNAs and, together with other initiation factors, stimulates binding of mRNA and methionyl-tRNAi to the 40S ribosome. The eIF-3 complex specifically targets and initiates translation of a subset of mRNAs involved in cell proliferation. The polypeptide is Eukaryotic translation initiation factor 3 subunit I (Phaeosphaeria nodorum (strain SN15 / ATCC MYA-4574 / FGSC 10173) (Glume blotch fungus)).